We begin with the raw amino-acid sequence, 408 residues long: BTB/POZ and MATH domain-containing protein 3 (408 aa).

One can recognise an MATH domain in the interval 24–158 (NGSHQFTIQG…DDCLVINCTV (135 aa)). Residues 194–261 (CDIAFQVGDE…IYTDVLPNVH (68 aa)) form the BTB domain.

This sequence belongs to the Tdpoz family. As to quaternary structure, homodimer or heterodimer with BPM3 and BPM5. Interacts with CUL3A and CUL3B. Interacts with RAP2-4 and RAP2-13. Binds to MYB56 at the promoter of FLOWERING LOCUS T (FT). In terms of tissue distribution, ubiquitous.

It is found in the nucleus. The protein localises to the cytoplasm. It functions in the pathway protein modification; protein ubiquitination. In terms of biological role, may act as a substrate-specific adapter of an E3 ubiquitin-protein ligase complex (CUL3-RBX1-BTB) which mediates the ubiquitination and subsequent proteasomal degradation of target proteins. The polypeptide is BTB/POZ and MATH domain-containing protein 3 (Arabidopsis thaliana (Mouse-ear cress)).